The sequence spans 395 residues: Transmembrane protein 79 (395 aa).

The interval 1 to 115 (MTEPETLALL…PPTKLEELPE (115 aa)) is disordered. The Cytoplasmic segment spans residues 1–204 (MTEPETLALL…GREALRAVAS (204 aa)). A helical transmembrane segment spans residues 205 to 225 (VGAALILFPCLLYGAYAFLPF). The Extracellular portion of the chain corresponds to 226–244 (DAPRLPTMSSRLIYTLRCG). A helical membrane pass occupies residues 245-265 (VFATFPIVLGILVYGLSLLCF). The Cytoplasmic segment spans residues 266–290 (AALRPFGEPRREVEIHRQYVAQSVQ). The chain crosses the membrane as a helical span at residues 291-311 (LFILYFFNLAVLSTYLPQDAL). At 312 to 313 (KL) the chain is on the extracellular side. The chain crosses the membrane as a helical span at residues 314–334 (LPLLTGLFAISRLIYWLTFAV). Over 335-343 (GRSFRGFGY) the chain is Cytoplasmic. Residues 344 to 364 (GLTFLPLLSMLLWNFYYMFVV) form a helical membrane-spanning segment. At 365-395 (EPERMLTASESRLDYPDHARSASDYRPRSRG) the chain is on the extracellular side.

Its subcellular location is the lysosome. It localises to the golgi apparatus. The protein localises to the trans-Golgi network. It is found in the membrane. Its function is as follows. Contributes to the epidermal integrity and skin barrier function. Plays a role in the lamellar granule (LG) secretory system and in the stratum corneum (SC) epithelial cell formation. This is Transmembrane protein 79 (TMEM79) from Bos taurus (Bovine).